The primary structure comprises 453 residues: Ribulose bisphosphate carboxylase large chain (453 aa).

A propeptide spanning residues 1–2 is cleaved from the precursor; sequence MS. Pro-3 carries the post-translational modification N-acetylproline. Residue Lys-14 is modified to N6,N6,N6-trimethyllysine. Substrate is bound by residues Asn-123 and Thr-173. Lys-175 acts as the Proton acceptor in catalysis. Residue Lys-177 participates in substrate binding. Residues Lys-201, Asp-203, and Glu-204 each coordinate Mg(2+). The residue at position 201 (Lys-201) is an N6-carboxylysine. His-294 (proton acceptor) is an active-site residue. The substrate site is built by Arg-295, His-327, and Ser-379.

The protein belongs to the RuBisCO large chain family. Type I subfamily. In terms of assembly, heterohexadecamer of 8 large chains and 8 small chains; disulfide-linked. The disulfide link is formed within the large subunit homodimers. Requires Mg(2+) as cofactor. In terms of processing, the disulfide bond which can form in the large chain dimeric partners within the hexadecamer appears to be associated with oxidative stress and protein turnover.

It localises to the plastid. Its subcellular location is the chloroplast. It catalyses the reaction 2 (2R)-3-phosphoglycerate + 2 H(+) = D-ribulose 1,5-bisphosphate + CO2 + H2O. The enzyme catalyses D-ribulose 1,5-bisphosphate + O2 = 2-phosphoglycolate + (2R)-3-phosphoglycerate + 2 H(+). RuBisCO catalyzes two reactions: the carboxylation of D-ribulose 1,5-bisphosphate, the primary event in carbon dioxide fixation, as well as the oxidative fragmentation of the pentose substrate in the photorespiration process. Both reactions occur simultaneously and in competition at the same active site. This is Ribulose bisphosphate carboxylase large chain from Asperula laevigata (Smooth woodruff).